The primary structure comprises 354 residues: NAD-dependent protein deacetylase hst2-2 (354 aa).

The 264-residue stretch at 16 to 279 folds into the Deacetylase sirtuin-type domain; it reads QCQNQTTLDS…REVARHLGWD (264 aa). NAD(+) contacts are provided by residues 43-63 and 126-129; these read GAGL…TGLY and QNID. His146 functions as the Proton acceptor in the catalytic mechanism. 4 residues coordinate Zn(2+): Cys154, Cys157, Cys178, and Cys183. NAD(+) is bound by residues 220–222, 245–247, and Cys265; these read GTS and NRE.

This sequence belongs to the sirtuin family. Class I subfamily. Zn(2+) is required as a cofactor.

The protein localises to the nucleus. The enzyme catalyses N(6)-acetyl-L-lysyl-[protein] + NAD(+) + H2O = 2''-O-acetyl-ADP-D-ribose + nicotinamide + L-lysyl-[protein]. NAD-dependent histone deacetylase, which could function in telomeric silencing, cell cycle progression and chromosome stability. The chain is NAD-dependent protein deacetylase hst2-2 from Emericella nidulans (strain FGSC A4 / ATCC 38163 / CBS 112.46 / NRRL 194 / M139) (Aspergillus nidulans).